The following is a 162-amino-acid chain: MSAKINAKKLEMFDLLKQFIDSKQNLFFLDYRGLNVAQLTELRNKIEGEHGSLKVVKNNIMKMVLKEKNINVVDSCLVGPTVVVTALEEANVIAKIFYDFVKSSTLKVKGGFVLGEFYDEAKVQAYSKLPTKKESISLFASVLKAPVSKLARTLKALADVKN.

The protein belongs to the universal ribosomal protein uL10 family. Part of the ribosomal stalk of the 50S ribosomal subunit. The N-terminus interacts with L11 and the large rRNA to form the base of the stalk. The C-terminus forms an elongated spine to which L12 dimers bind in a sequential fashion forming a multimeric L10(L12)X complex.

Functionally, forms part of the ribosomal stalk, playing a central role in the interaction of the ribosome with GTP-bound translation factors. The protein is Large ribosomal subunit protein uL10 (rplJ) of Borreliella burgdorferi (strain ATCC 35210 / DSM 4680 / CIP 102532 / B31) (Borrelia burgdorferi).